The following is a 409-amino-acid chain: Glycogenin (409 aa).

Residues leucine 8, tyrosine 14, and arginine 80 each coordinate UDP. Leucine 8, tyrosine 14, arginine 80, lysine 89, aspartate 105, aspartate 107, asparagine 140, serine 141, aspartate 169, aspartate 172, and glutamine 173 together coordinate UDP-alpha-D-glucose. Positions 105 and 107 each coordinate UDP. Aspartate 105 and aspartate 107 together coordinate Mn(2+). Tyrosine 212 carries an O-linked (Glc...) tyrosine glycan. UDP is bound by residues histidine 229, glycine 232, and lysine 235. Residue histidine 229 coordinates Mn(2+). Residues glycine 232 and lysine 235 each contribute to the UDP-alpha-D-glucose site. The tract at residues 283–303 (RIEEDSHETEEKVDEEVSISE) is disordered.

It belongs to the glycosyltransferase 8 family. Glycogenin subfamily. It depends on Mn(2+) as a cofactor.

The protein resides in the cytoplasm. Its subcellular location is the vacuole. It carries out the reaction L-tyrosyl-[glycogenin] + UDP-alpha-D-glucose = alpha-D-glucosyl-L-tyrosyl-[glycogenin] + UDP + H(+). The catalysed reaction is [1,4-alpha-D-glucosyl](n)-L-tyrosyl-[glycogenin] + UDP-alpha-D-glucose = [1,4-alpha-D-glucosyl](n+1)-L-tyrosyl-[glycogenin] + UDP + H(+). Its function is as follows. Glycogenin participates in the glycogen biosynthetic process along with glycogen synthase and glycogen branching enzyme. It catalyzes the formation of a short alpha (1,4)-glucosyl chain covalently attached via a glucose 1-O-tyrosyl linkage to internal tyrosine residues and these chains act as primers for the elongation reaction catalyzed by glycogen synthase. In Komagataella phaffii (strain GS115 / ATCC 20864) (Yeast), this protein is Glycogenin.